Consider the following 104-residue polypeptide: Large ribosomal subunit protein uL24 (104 aa).

This sequence belongs to the universal ribosomal protein uL24 family. As to quaternary structure, part of the 50S ribosomal subunit.

Its function is as follows. One of two assembly initiator proteins, it binds directly to the 5'-end of the 23S rRNA, where it nucleates assembly of the 50S subunit. One of the proteins that surrounds the polypeptide exit tunnel on the outside of the subunit. The protein is Large ribosomal subunit protein uL24 of Clostridium botulinum (strain Eklund 17B / Type B).